The primary structure comprises 325 residues: MDINKQKTKWDISIFKNENFTLPVIKSPFNTYYNKYIDSVINDIEEWHRECCFLGREKLKGYIESKPYLFSAYYYCHLNEKVLPFIIKFVDMFSIYDDEYLEKTNCSEDVINQFLDKNYKDKNIYGVEWFKIVEGLKKYGNKQSVNKFLKEFEFFIKNVHSIHLKENANYTNINFEEYTNTRSIDFGFDLVVSAAIIDCEEPSKEIRESSLFLTLNTKSSIICVLVNDIYSFVKESKQPDTMNYVKIMANKKKSIQKALNHTNKIINNTLKEIISIENQIKMQYKENNLYQYIERLNSVISATIYLHQNHKRYSVHNKNYINKNN.

A DDxx(x)D/E motif motif is present at residues 97-102; the sequence is DDEYLE. The NDxxSxxxD/E motif signature appears at 227-235; sequence NDIYSFVKE.

It belongs to the terpene synthase family.

It catalyses the reaction (2E,6E)-farnesyl diphosphate = (E)-beta-farnesene + diphosphate. The catalysed reaction is (2E,6E)-farnesyl diphosphate = (3E,6E)-alpha-farnesene + diphosphate. The enzyme catalyses geranylgeranyl diphosphate + H2O = (S)-(+)-nephthenol + diphosphate. In terms of biological role, terpene synthase that converts its substrate farnesyl diphosphate (FPP) into the sesquiterpenes (E)-beta-farnesene and (E,E)-alpha-farnesene. TPS11 also converts geranylgeranyl diphosphate (GGPP) into the diterpene (S)-nephthenol. The polypeptide is Terpene synthase 11 (Dictyostelium purpureum (Slime mold)).